Reading from the N-terminus, the 319-residue chain is ATP-dependent 6-phosphofructokinase (319 aa).

Gly11 is an ATP binding site. 21–25 (RAVVR) contributes to the ADP binding site. ATP contacts are provided by residues 72–73 (RC) and 102–105 (GNGS). Position 103 (Asn103) interacts with Mg(2+). Residue 125–127 (TID) participates in substrate binding. Catalysis depends on Asp127, which acts as the Proton acceptor. Arg154 contacts ADP. Residues Arg162 and 169–171 (MGR) contribute to the substrate site. Residues 185-187 (GAE), Arg211, and 213-215 (KMH) each bind ADP. Residues Glu222, Arg243, and 249–252 (HIQR) each bind substrate.

This sequence belongs to the phosphofructokinase type A (PFKA) family. ATP-dependent PFK group I subfamily. Prokaryotic clade 'B1' sub-subfamily. In terms of assembly, homotetramer. The cofactor is Mg(2+).

Its subcellular location is the cytoplasm. The catalysed reaction is beta-D-fructose 6-phosphate + ATP = beta-D-fructose 1,6-bisphosphate + ADP + H(+). The protein operates within carbohydrate degradation; glycolysis; D-glyceraldehyde 3-phosphate and glycerone phosphate from D-glucose: step 3/4. Allosterically activated by ADP and other diphosphonucleosides, and allosterically inhibited by phosphoenolpyruvate. In terms of biological role, catalyzes the phosphorylation of D-fructose 6-phosphate to fructose 1,6-bisphosphate by ATP, the first committing step of glycolysis. The sequence is that of ATP-dependent 6-phosphofructokinase from Clostridium acetobutylicum (strain ATCC 824 / DSM 792 / JCM 1419 / IAM 19013 / LMG 5710 / NBRC 13948 / NRRL B-527 / VKM B-1787 / 2291 / W).